Consider the following 1296-residue polypeptide: DNA-directed RNA polymerase subunit beta' (1296 aa).

Zn(2+) is bound by residues Cys-60, Cys-62, Cys-75, and Cys-78. Positions 185–202 are enriched in basic and acidic residues; that stretch reads EEEGGKAAEKRKLRDSAD. The disordered stretch occupies residues 185-204; it reads EEEGGKAAEKRKLRDSADRQ. Residues Asp-535, Asp-537, and Asp-539 each contribute to the Mg(2+) site. 4 residues coordinate Zn(2+): Cys-877, Cys-954, Cys-961, and Cys-964.

Belongs to the RNA polymerase beta' chain family. As to quaternary structure, the RNAP catalytic core consists of 2 alpha, 1 beta, 1 beta' and 1 omega subunit. When a sigma factor is associated with the core the holoenzyme is formed, which can initiate transcription. The cofactor is Mg(2+). It depends on Zn(2+) as a cofactor.

It carries out the reaction RNA(n) + a ribonucleoside 5'-triphosphate = RNA(n+1) + diphosphate. In terms of biological role, DNA-dependent RNA polymerase catalyzes the transcription of DNA into RNA using the four ribonucleoside triphosphates as substrates. In Kocuria rhizophila (strain ATCC 9341 / DSM 348 / NBRC 103217 / DC2201), this protein is DNA-directed RNA polymerase subunit beta'.